The chain runs to 1368 residues: MERDIYGDMADQHIPVGQGVQIRFIGDLKENGKPRGKRSKQDSYGVAVRVQGIDGQPFVVLNSGDKAKSSFGVQIKSQEPYLNASNTSPPNYQNYSSKPRGPSRSISSESELPENPYGSRGYRPSSSHYSSASDEEQKPRGNIRGSDGLSSLPRPLQASRREELRRSQSHSSLLEPDVEESYDYDHHYSERSSTLDTTYSQSSRDSAWSRSSQKKIDNGDYPSLGYRSATSQQSTSVSNKTKKNGLSTSSPSNQSNEDIDTKPLSSVDSLINKFDIKGQVRGRTARRSQALKDERKRSQSLDGRKNYHDTADSREIIVEKQNEVQTMREPVNASNRSFNRQTLERGDISKTRLTKEWLDQDREEPVILKQQRTVQSEFQLKSTPDLLRDQQPDGSDPTREMIFGILREGSLESENTLRKKTSILLEKLPSLQVQPGEDTISLGSQKKELERKVAELQRQLDDEMKQRMKLETSQGRPKAGMQRLEIELEESKEECSRLKELYEKKKNELSAMSQELMEVRMGKEQVETKLRTMEDKLMDSKEELSHLRAKGGTSPDKLALLKELEEVQDELDEVLQIRQKQEELLRQKDRELTALKGALKDEVANHDKDLDRVREQYQNDMQQLRKNMDNVSQDQLSLESERQKINQVVRNLQRELEESSDEISQWKEMFQKNKEELRSTKQELLQMKLEKEESEDELKETRDRFSLLQSELAQVKKGSVDPGEVASVRKELQRVQDQLKQLSVDKQKVEENLQQREREMSALKGTLKEEVSGRDRETVRLREQLQSEVMHVKKENEGLAKESRRIQDQLKQVLLEKQRHEETVHQRERELSVLKGALKDEVSGRDRETEKLRERLEQDALMTKRSYEELVKINKRLESEKTDLERVRQVIENNLQESREENDDLRRKILGLEAQLKETNTFCDDLQRAESRLKDKINKLEAERKRMEDSLGEVADQEQELAFVKRDLESKLDEAQRSLKRLSLEYEELQECYQEEMKQKDHLKKTKNELEEQKRLLDKSMDKLTRELDNMSNESRGSLQLLQTQLEEYREKSRKEIGEAQKQAKEKTAEAERHQFNSSRMQEEVQKLKLALQELQVEKETVELDKQMISQRLQSLEQDIESKKRVQDDRSRQVKVLEDKLKRMEAELDEEKNTVELLTDRVNRSRDQMEQQRAELNQERSRGQDLECDKISLERQNKELKNRLASMEGQQKPSVNVSHLEAKLQEIQERLQLEEREKATLLSTNRKLERKLKELNIQLEDERLQVNDQKDQLNLRVKALKRQVDEAEEEIERLEGLRKKAVREMEEQQEINEQLQTRVKVMEKESKRKPIRPAHDDDLSSDGEFGGPYDPSSITSLLTESNLQTSSC.

Residues 9 to 378 (MADQHIPVGQ…KQQRTVQSEF (370 aa)) are interaction with TJP3/ZO3 and myosin. The segment at 9–435 (MADQHIPVGQ…EKLPSLQVQP (427 aa)) is head. The ZIM motif lies at 41–55 (QDSYGVAVRVQGIDG). Disordered stretches follow at residues 71 to 264 (FGVQ…TKPL), 278 to 312 (GQVRGRTARRSQALKDERKRSQSLDGRKNYHDTAD), 1053 to 1080 (SRKEIGEAQKQAKEKTAEAERHQFNSSR), 1163 to 1183 (NRSRDQMEQQRAELNQERSRG), and 1308 to 1368 (QQEI…TSSC). Positions 83-97 (NASNTSPPNYQNYSS) are enriched in polar residues. Residues 101–294 (GPSRSISSES…ARRSQALKDE (194 aa)) are interaction with F-actin. Composition is skewed to low complexity over residues 116–132 (PYGSRGYRPSSSHYSSA) and 200–211 (SQSSRDSAWSRS). The interaction with TJP2/ZO2 stretch occupies residues 150–295 (SSLPRPLQAS…RRSQALKDER (146 aa)). The span at 228–256 (SATSQQSTSVSNKTKKNGLSTSSPSNQSN) shows a compositional bias: polar residues. The segment covering 290-312 (ALKDERKRSQSLDGRKNYHDTAD) has biased composition (basic and acidic residues). Residues 377-1368 (EFQLKSTPDL…TESNLQTSSC (992 aa)) form an interaction with myosin region. Positions 436 to 1330 (GEDTISLGSQ…VMEKESKRKP (895 aa)) form a coiled coil. Positions 1320–1338 (KVMEKESKRKPIRPAHDDD) are enriched in basic and acidic residues. Positions 1331 to 1368 (IRPAHDDDLSSDGEFGGPYDPSSITSLLTESNLQTSSC) are tail. Positions 1352–1368 (SSITSLLTESNLQTSSC) are enriched in polar residues.

The protein belongs to the cingulin family. Parallel homodimer. Interacts with TJP1/ZO1 and TJP2/ZO2 in vivo, and TJP3/ZO3, myosin and OCLN in vitro, possibly directly. Acts as an F-actin bundling protein in vitro. Localized on the cytoplasmic face of tight junctions of polarized epithelia and some endothelia.

It is found in the cell junction. The protein localises to the tight junction. In terms of biological role, probably plays a role in the formation and regulation of the tight junction (TJ) paracellular permeability barrier, possibly by linking ZO proteins to the actomyosin cytoskeleton. The chain is Cingulin from Xenopus laevis (African clawed frog).